We begin with the raw amino-acid sequence, 96 residues long: Aspartyl/glutamyl-tRNA(Asn/Gln) amidotransferase subunit C (96 aa).

The protein belongs to the GatC family. Heterotrimer of A, B and C subunits.

The catalysed reaction is L-glutamyl-tRNA(Gln) + L-glutamine + ATP + H2O = L-glutaminyl-tRNA(Gln) + L-glutamate + ADP + phosphate + H(+). The enzyme catalyses L-aspartyl-tRNA(Asn) + L-glutamine + ATP + H2O = L-asparaginyl-tRNA(Asn) + L-glutamate + ADP + phosphate + 2 H(+). Allows the formation of correctly charged Asn-tRNA(Asn) or Gln-tRNA(Gln) through the transamidation of misacylated Asp-tRNA(Asn) or Glu-tRNA(Gln) in organisms which lack either or both of asparaginyl-tRNA or glutaminyl-tRNA synthetases. The reaction takes place in the presence of glutamine and ATP through an activated phospho-Asp-tRNA(Asn) or phospho-Glu-tRNA(Gln). The chain is Aspartyl/glutamyl-tRNA(Asn/Gln) amidotransferase subunit C from Bacillus cytotoxicus (strain DSM 22905 / CIP 110041 / 391-98 / NVH 391-98).